The chain runs to 966 residues: Calsyntenin-2 (966 aa).

A signal peptide spans 1–20; the sequence is MLPGRLCLVPLLLALGVGSG. Residues 21–835 are Extracellular-facing; sequence GGSGDGGDSR…SIQRSSVVPS (815 aa). Cadherin domains are found at residues 46–162 and 163–282; these read IETS…APTF and KEPA…MPLF. Residues asparagine 58 and asparagine 100 are each glycosylated (N-linked (GlcNAc...) asparagine). N-linked (GlcNAc...) asparagine glycans are attached at residues asparagine 344, asparagine 376, asparagine 720, and asparagine 733. The chain crosses the membrane as a helical span at residues 836 to 856; sequence IATVVIIISVCMLVFVVAMGV. Over 857–966 the chain is Cytoplasmic; sequence YRVRIAHQHF…NTAGVINIWK (110 aa). Residues 890–966 form a disordered region; it reads NPMEKHEGPG…NTAGVINIWK (77 aa). Residues 901–916 show a composition bias toward acidic residues; that stretch reads GEDETTEVEEEEEAEE. The span at 943–960 shows a compositional bias: polar residues; that stretch reads QSGTSSQSPERSTWNTAG.

Belongs to the calsyntenin family. Post-translationally, proteolytically processed under normal cellular conditions. A primary zeta-cleavage generates a large extracellular (soluble) N-terminal domain (sAlc) and a short C-terminal transmembrane fragment (CTF1). A secondary cleavage catalyzed by gamma-secretase within the transmembrane domain releases the beta-Alc-gamma chain in the extracellular milieu and produces an intracellular fragment (AlcICD). This processing is strongly suppressed in the tripartite complex formed with APBA2 and APP, which seems to prevent the association with PSEN1. As to expression, restricted to the brain. In the cerebral cortex, found in the somas and neuropil of all layers. Expressed at highest levels in neurons of cortical layers 5 and 6 and, at lower levels, in neurons of the upper layers. Highly expressed in Purkinje cells. Also found in a few scattered interneurons throughout the granule cell layer and occasionally in neurons in the molecular layer (at protein level). Present throughout all cortical layers, highest levels in GABAergic neurons (based on morphology and distribution pattern).

Its subcellular location is the postsynaptic cell membrane. The protein resides in the endoplasmic reticulum membrane. The protein localises to the golgi apparatus membrane. It localises to the cell projection. It is found in the dendrite. Postsynaptic adhesion molecule that binds to presynaptic neurexins to mediate synapse formation, and which is involved in learning and memory. Promotes synapse development by acting as a cell adhesion molecule at the postsynaptic membrane, which associates with neurexin-alpha at the presynaptic membrane. This is Calsyntenin-2 from Mus musculus (Mouse).